The primary structure comprises 680 residues: DNA-directed RNA polymerase subunit beta' (680 aa).

Cysteine 69, cysteine 71, cysteine 87, and cysteine 90 together coordinate Zn(2+). Aspartate 489, aspartate 491, and aspartate 493 together coordinate Mg(2+).

It belongs to the RNA polymerase beta' chain family. RpoC1 subfamily. As to quaternary structure, in plastids the minimal PEP RNA polymerase catalytic core is composed of four subunits: alpha, beta, beta', and beta''. When a (nuclear-encoded) sigma factor is associated with the core the holoenzyme is formed, which can initiate transcription. Mg(2+) is required as a cofactor. It depends on Zn(2+) as a cofactor.

It is found in the plastid. The protein resides in the chloroplast. It catalyses the reaction RNA(n) + a ribonucleoside 5'-triphosphate = RNA(n+1) + diphosphate. Functionally, DNA-dependent RNA polymerase catalyzes the transcription of DNA into RNA using the four ribonucleoside triphosphates as substrates. In Barbarea verna (Land cress), this protein is DNA-directed RNA polymerase subunit beta'.